Reading from the N-terminus, the 676-residue chain is ATP-dependent RNA helicase dbp-9 (676 aa).

Positions methionine 1–phenylalanine 97 are disordered. The span at glutamine 70–lysine 90 shows a compositional bias: basic and acidic residues. The Q motif signature appears at leucine 95–arginine 123. The Helicase ATP-binding domain occupies isoleucine 126–methionine 304. Alanine 139 to threonine 146 contributes to the ATP binding site. A DEAD box motif is present at residues aspartate 251–aspartate 254. One can recognise a Helicase C-terminal domain in the interval lysine 317–glutamate 541. A compositionally biased stretch (basic and acidic residues) spans glutamate 410–asparagine 432. Disordered regions lie at residues glutamate 410–glutamine 444 and phenylalanine 633–lysine 676. The span at threonine 642–glycine 663 shows a compositional bias: basic residues.

Belongs to the DEAD box helicase family. DDX56/DBP9 subfamily.

The protein resides in the nucleus. The protein localises to the nucleolus. The enzyme catalyses ATP + H2O = ADP + phosphate + H(+). Functionally, ATP-binding RNA helicase involved in the biogenesis of 60S ribosomal subunits and is required for the normal formation of 25S and 5.8S rRNAs. The sequence is that of ATP-dependent RNA helicase dbp-9 (dbp-9) from Neurospora crassa (strain ATCC 24698 / 74-OR23-1A / CBS 708.71 / DSM 1257 / FGSC 987).